The chain runs to 88 residues: Exodeoxyribonuclease 7 small subunit (88 aa).

Positions 69-88 (ALAEEADPEDGASGADGGGA) are disordered.

The protein belongs to the XseB family. As to quaternary structure, heterooligomer composed of large and small subunits.

Its subcellular location is the cytoplasm. It carries out the reaction Exonucleolytic cleavage in either 5'- to 3'- or 3'- to 5'-direction to yield nucleoside 5'-phosphates.. Bidirectionally degrades single-stranded DNA into large acid-insoluble oligonucleotides, which are then degraded further into small acid-soluble oligonucleotides. The chain is Exodeoxyribonuclease 7 small subunit from Streptomyces coelicolor (strain ATCC BAA-471 / A3(2) / M145).